Reading from the N-terminus, the 348-residue chain is Uroporphyrinogen decarboxylase (348 aa).

Residues 29 to 33 (RQAGR), aspartate 79, tyrosine 155, threonine 210, and histidine 326 contribute to the substrate site.

Belongs to the uroporphyrinogen decarboxylase family. As to quaternary structure, homodimer.

It localises to the cytoplasm. It catalyses the reaction uroporphyrinogen III + 4 H(+) = coproporphyrinogen III + 4 CO2. It participates in porphyrin-containing compound metabolism; protoporphyrin-IX biosynthesis; coproporphyrinogen-III from 5-aminolevulinate: step 4/4. Functionally, catalyzes the decarboxylation of four acetate groups of uroporphyrinogen-III to yield coproporphyrinogen-III. The chain is Uroporphyrinogen decarboxylase from Rhodospirillum rubrum (strain ATCC 11170 / ATH 1.1.1 / DSM 467 / LMG 4362 / NCIMB 8255 / S1).